A 414-amino-acid chain; its full sequence is Serine/threonine transporter SstT (414 aa).

At 2-15 (TTQRSPGLFRRLAH) the chain is on the cytoplasmic side. Residues 16-36 (GSLVKQILVGLVLGILLAWIS) form a helical membrane-spanning segment. Topologically, residues 37 to 45 (KPAAEAVGL) are periplasmic. Residues 46–66 (LGTLFVGALKAVAPILVLMLV) traverse the membrane as a helical segment. Topologically, residues 67-83 (MASIANHQHGQKTNIRP) are cytoplasmic. Residues 84 to 104 (ILFLYLLGTFSAALAAVVFSF) form a helical membrane-spanning segment. The Periplasmic portion of the chain corresponds to 105–142 (AFPSTLHLSSSAGDISPPSGIVEVMRGLVMSMVSNPID). A helical membrane pass occupies residues 143-163 (ALLKGNYIGILVWAIGLGFAL). Topologically, residues 164-179 (RHGNETTKNLVNDLSN) are cytoplasmic. The chain crosses the membrane as a helical span at residues 180–200 (AVTFMVKLVIRFAPIGIFGLV). At 201–217 (SSTLATTGFSTLWGYAQ) the chain is on the periplasmic side. Residues 218–238 (LLVVLVGCMLLVALVVNPLLV) form a helical membrane-spanning segment. The Cytoplasmic portion of the chain corresponds to 239–299 (WWKIRRNPFP…VSIPLGATIN (61 aa)). The helical transmembrane segment at 300–320 (MAGAAITITVLTLAAVNTLGI) threads the bilayer. The Periplasmic segment spans residues 321–331 (PVDLPTALLLS). Residues 332–352 (VVASLCACGASGVAGGSLLLI) form a helical membrane-spanning segment. Over 353–414 (PLACNMFGIS…DRLANSALRN (62 aa)) the chain is Cytoplasmic.

This sequence belongs to the dicarboxylate/amino acid:cation symporter (DAACS) (TC 2.A.23) family.

It is found in the cell inner membrane. The enzyme catalyses L-serine(in) + Na(+)(in) = L-serine(out) + Na(+)(out). The catalysed reaction is L-threonine(in) + Na(+)(in) = L-threonine(out) + Na(+)(out). In terms of biological role, involved in the import of serine and threonine into the cell, with the concomitant import of sodium (symport system). The protein is Serine/threonine transporter SstT of Shigella boydii serotype 4 (strain Sb227).